The sequence spans 1321 residues: C-Jun-amino-terminal kinase-interacting protein 4 (1321 aa).

Met1 carries the post-translational modification N-acetylmethionine. The 89-residue stretch at 7 to 95 (VVYQEEPGGS…ITQYEREKAL (89 aa)) folds into the RH1 domain. Residues 66 to 166 (AQDQEHQVEL…NALHQRHTEM (101 aa)) are a coiled coil. Phosphoserine is present on residues Ser109, Ser183, Ser185, Ser194, and Ser203. A disordered region spans residues 203 to 308 (SLGIFPLPAG…EGFVKGTDTS (106 aa)). Position 217 is a phosphothreonine (Thr217). Residues 236 to 248 (ELSQPRSHTSLKV) are compositionally biased toward polar residues. A phosphoserine mark is found at Ser238, Ser251, Ser265, Ser268, and Ser272. The segment covering 266 to 285 (DISQGGSKATTPASTANSDV) has biased composition (polar residues). Thr292 is modified (phosphothreonine). Phosphoserine is present on residues Ser311, Ser329, Ser332, and Ser347. The segment covering 322–332 (AQETRNVSTES) has biased composition (polar residues). A disordered region spans residues 322–341 (AQETRNVSTESGENEEKSEV). Residues Thr348, Thr365, and Thr418 each carry the phosphothreonine modification. The stretch at 408-534 (REVENLILEN…LQEAVRWTEM (127 aa)) forms a coiled coil. Basic and acidic residues predominate over residues 473–489 (LRKARAEAEDARQKAKD). Disordered stretches follow at residues 473–500 (LRKARAEAEDARQKAKDDDDSDIPTAQR) and 563–600 (SSNATKKPEPPVNLKYNAPTSHVTPSVKKRSSTLSQLP). Positions 500-604 (RKRFTRVEMA…TLSQLPGDKS (105 aa)) constitute an RH2 domain. Thr586 is subject to Phosphothreonine. Ser588 is modified (phosphoserine). Thr595 bears the Phosphothreonine mark. Ser705, Ser728, Ser730, Ser732, and Ser733 each carry phosphoserine. Positions 724 to 758 (SKQRSASQSSLDKLDQELKEQQKEFKNQEELSSQV) form a coiled coil. The segment at 853 to 883 (TGAATSPSTNGASPVIEKPPEMETENSEVDE) is disordered. Positions 855 to 864 (AATSPSTNGA) are enriched in polar residues. Over residues 874–883 (METENSEVDE) the composition is skewed to acidic residues. Residue Ser1188 is modified to Phosphoserine. A disordered region spans residues 1239 to 1267 (PQSSSGGADLTADKAGSSAQEPSSQTPLK). Residues 1255–1266 (SSAQEPSSQTPL) show a composition bias toward polar residues. Phosphothreonine is present on Thr1264.

Belongs to the JIP scaffold family. In terms of assembly, homodimer. The homodimer interacts with ARF6, forming a heterotetramer. Homooligomer. Interacts with MAX, MAPK8, MAPK14, MAP3K3, MYC, and MAP2K4. Interacts with KNS2. Interaction with KNS2 is important in the formation of ternary complex with MAPK8. Interacts with PIP4P1. Interacts with PIKFYVE. In terms of processing, phosphorylated by MAPK8 and MAPK14. Highly expressed in brain, kidney, liver, heart.

It is found in the cytoplasm. The protein localises to the perinuclear region. The protein resides in the lysosome membrane. In terms of biological role, the JNK-interacting protein (JIP) group of scaffold proteins selectively mediates JNK signaling by aggregating specific components of the MAPK cascade to form a functional JNK signaling module. Regulates lysosomal positioning by acting as an adapter protein which links PIP4P1-positive lysosomes to the dynein-dynactin complex. Assists PIKFYVE selective functionality in microtubule-based endosome-to-TGN trafficking. This is C-Jun-amino-terminal kinase-interacting protein 4 from Mus musculus (Mouse).